Here is a 249-residue protein sequence, read N- to C-terminus: 2-dehydro-3-deoxy-L-rhamnonate dehydrogenase (NAD(+)) (249 aa).

Residue Y156 is the Proton acceptor of the active site.

Belongs to the short-chain dehydrogenases/reductases (SDR) family. Homotetramer.

The catalysed reaction is 2-dehydro-3-deoxy-L-rhamnonate + NAD(+) = 2,4-didehydro-3-deoxy-L-rhamnonate + NADH + H(+). It participates in carbohydrate degradation; L-rhamnose degradation. Its function is as follows. Catalyzes the NAD(+)-dependent dehydrogenation of 2-dehydro-3-deoxy-L-rhamnonate to form 2,4-didehydro-3-deoxy-L-rhamnonate. Does not show any detectable activity in the presence of NADP(+). Catalyzes the fourth step in an alternative pathway for rhamnose utilization that does not involve phosphorylated intermediates. The sequence is that of 2-dehydro-3-deoxy-L-rhamnonate dehydrogenase (NAD(+)) from Sphingomonas sp. (strain SKA58).